Reading from the N-terminus, the 452-residue chain is Pup--protein ligase (452 aa).

E9 contributes to the Mg(2+) binding site. R53 is a binding site for ATP. Y55 lines the Mg(2+) pocket. Catalysis depends on D57, which acts as the Proton acceptor. Position 63 (E63) interacts with Mg(2+). ATP is bound by residues T66 and W419.

Belongs to the Pup ligase/Pup deamidase family. Pup-conjugating enzyme subfamily.

The enzyme catalyses ATP + [prokaryotic ubiquitin-like protein]-L-glutamate + [protein]-L-lysine = ADP + phosphate + N(6)-([prokaryotic ubiquitin-like protein]-gamma-L-glutamyl)-[protein]-L-lysine.. The protein operates within protein degradation; proteasomal Pup-dependent pathway. It functions in the pathway protein modification; protein pupylation. Functionally, catalyzes the covalent attachment of the prokaryotic ubiquitin-like protein modifier Pup to the proteasomal substrate proteins, thereby targeting them for proteasomal degradation. This tagging system is termed pupylation. The ligation reaction involves the side-chain carboxylate of the C-terminal glutamate of Pup and the side-chain amino group of a substrate lysine. The sequence is that of Pup--protein ligase from Geodermatophilus obscurus (strain ATCC 25078 / DSM 43160 / JCM 3152 / CCUG 61914 / KCC A-0152 / KCTC 9177 / NBRC 13315 / NRRL B-3577 / G-20).